A 392-amino-acid polypeptide reads, in one-letter code: Small ribosomal subunit protein uS9m (392 aa).

Low complexity predominate over residues 8 to 25 (RSSRAMSSASPASASDSD). The disordered stretch occupies residues 8 to 27 (RSSRAMSSASPASASDSDTS).

It belongs to the universal ribosomal protein uS9 family. In terms of assembly, component of the mitochondrial ribosome small subunit (28S) which comprises a 12S rRNA and about 30 distinct proteins.

The protein resides in the mitochondrion. This Caenorhabditis elegans protein is Small ribosomal subunit protein uS9m (mrps-9).